The primary structure comprises 278 residues: 4-deoxy-L-threo-5-hexosulose-uronate ketol-isomerase (278 aa).

Positions 196, 198, 203, and 245 each coordinate Zn(2+).

It belongs to the KduI family. Homohexamer. Requires Zn(2+) as cofactor.

It carries out the reaction 5-dehydro-4-deoxy-D-glucuronate = 3-deoxy-D-glycero-2,5-hexodiulosonate. It participates in glycan metabolism; pectin degradation; 2-dehydro-3-deoxy-D-gluconate from pectin: step 4/5. In terms of biological role, catalyzes the isomerization of 5-dehydro-4-deoxy-D-glucuronate to 3-deoxy-D-glycero-2,5-hexodiulosonate. The sequence is that of 4-deoxy-L-threo-5-hexosulose-uronate ketol-isomerase from Escherichia coli (strain SMS-3-5 / SECEC).